Here is a 100-residue protein sequence, read N- to C-terminus: Urease subunit gamma (100 aa).

The protein belongs to the urease gamma subunit family. In terms of assembly, heterotrimer of UreA (gamma), UreB (beta) and UreC (alpha) subunits. Three heterotrimers associate to form the active enzyme.

The protein localises to the cytoplasm. The enzyme catalyses urea + 2 H2O + H(+) = hydrogencarbonate + 2 NH4(+). The protein operates within nitrogen metabolism; urea degradation; CO(2) and NH(3) from urea (urease route): step 1/1. The chain is Urease subunit gamma from Bacillus sp. (strain TB-90).